The primary structure comprises 523 residues: MLVLLLLVLLLAVPPRRTAELQLGLREPIGAVSPAFLSLTLDASLARDPRFVALLRHPKLHTLASGLSPGFLRFGGTSTDFLIFNPNKDSTWEEKVLSEFQAKDVCEAWPSFAVVPKLLLTQWPLQEKLLLAEHSWKKHKNTTITRSTLDILHTFASSSGFRLVFGLNALLRRAGLQWDSSNAKQLLGYCAQRSYNISWELGNEPNSFRKKSGICIDGFQLGRDFVHLRQLLSQHPLYRHAELYGLDVGQPRKHTQHLLRSFMKSGGKAIDSVTWHHYYVNGRSATREDFLSPEVLDSFATAIHDVLGIVEATVPGKKVWLGETGSAYGGGAPQLSNTYVAGFMWLDKLGLAARRGIDVVMRQVSFGAGSYHLVDAGFKPLPDYWLSLLYKRLVGTRVLQASVEQADARRPRVYLHCTNPRHPKYREGDVTLFALNLSNVTQSLQLPKQLWSKSVDQYLLLPHGKDSILSREVQLNGRLLQMVDDETLPALHEMALAPGSTLGLPAFSYGFYVIRNAKAIACI.

A signal peptide spans 1–18 (MLVLLLLVLLLAVPPRRT). Residues 42-44 (DAS), T77, and 137-141 (KKHKN) contribute to the heparan sulfate group site. Residues N141 and N196 are each glycosylated (N-linked (GlcNAc...) asparagine). E204 serves as the catalytic Proton donor. Residues 250 to 260 (QPRKHTQHLLR), H276, and R283 each bind heparan sulfate group. The segment at 268–397 (KAIDSVTWHH…LLYKRLVGTR (130 aa)) is required for heterodimerization with the heparanase 8 kDa subunit. Catalysis depends on E323, which acts as the Nucleophile. Heparan sulfate group is bound by residues 328 to 330 (YGG) and 369 to 371 (GSY). The cysteines at positions 417 and 522 are disulfide-linked. N-linked (GlcNAc...) asparagine glycosylation is found at N436 and N439. The segment at 507-523 (FSYGFYVIRNAKAIACI) is required for transferring proheparanase to the Golgi apparatus, secretion and subsequent enzyme activity and for enhancement of PKB/AKT1 phosphorylation.

It belongs to the glycosyl hydrolase 79 family. In terms of assembly, heterodimer; the active enzyme is a heterodimer of the 60 kDa and 45 kDa proteolytic products. N-glycosylated. In terms of processing, proteolytically cleaved to produce a 60 kDa and a 45 kDa product.

It localises to the secreted. The catalysed reaction is endohydrolysis of (1-&gt;4)-beta-D-glycosidic bonds of heparan sulfate chains in heparan sulfate proteoglycan.. Functionally, endoglycosidase that cleaves heparan sulfate proteoglycans (HSPGs) into heparan sulfate side chains and core proteoglycans. Participates in extracellular matrix (ECM) degradation and remodeling. Selectively cleaves the linkage between a glucuronic acid unit and an N-sulfo glucosamine unit carrying either a 3-O-sulfo or a 6-O-sulfo group. Can also cleave the linkage between a glucuronic acid unit and an N-sulfo glucosamine unit carrying a 2-O-sulfo group, but not linkages between a glucuronic acid unit and a 2-O-sulfated iduronic acid moiety. Increases cell adhesion to the extracellular matrix (ECM), independent of its enzymatic activity. The polypeptide is Heparanase (HPSE) (Gallus gallus (Chicken)).